We begin with the raw amino-acid sequence, 249 residues long: DNA repair protein RecO (249 aa).

The protein belongs to the RecO family.

In terms of biological role, involved in DNA repair and RecF pathway recombination. This is DNA repair protein RecO from Solidesulfovibrio magneticus (strain ATCC 700980 / DSM 13731 / RS-1) (Desulfovibrio magneticus).